We begin with the raw amino-acid sequence, 602 residues long: Sensor histidine kinase AtsR (602 aa).

Transmembrane regions (helical) follow at residues 11–31 (IIVA…FLLF) and 182–202 (AIVM…LLLF). The Histidine kinase domain maps to 242-461 (MVSHELRTPL…EFVVTLPVEL (220 aa)). His-245 carries the post-translational modification Phosphohistidine; by autocatalysis. Residues 484-601 (HALVVDDNEN…TLNGIVSRLR (118 aa)) form the Response regulatory domain. The residue at position 533 (Asp-533) is a 4-aspartylphosphate.

It localises to the cell inner membrane. The enzyme catalyses ATP + protein L-histidine = ADP + protein N-phospho-L-histidine.. Member of a two-component regulatory system involved in control of gene expression; inhibits synthesis of (at least) the polyketide antibiotic thailandamide. Its two-component partner may be BTH_I0635. The polypeptide is Sensor histidine kinase AtsR (Burkholderia thailandensis (strain ATCC 700388 / DSM 13276 / CCUG 48851 / CIP 106301 / E264)).